Reading from the N-terminus, the 353-residue chain is MEINVQAIVIDNGSDTCKAGFVGEEAPRSEFPSIVGIDQNDKDSYVGNEAQSKRGILTLKYPIERGIITNWDDMEKIWHHAFYNELGVAPEENIVVLSESPLNPEENREKMAQIMFETFKTPAIYVENQAVFSIYNSGRMTGIVLDSGDSASHVVPVYEGLALPLATSSLGFAGCDLTDQMSLLLNDLGYNLEREIVRDIKEKLSYVSSDFLWEIDDPSLEKSYELPDGQVITIGKELLACSEGLFLPYVFFGTNLDGIDKAIYNSIMKCDVDIHNDLYGNVVLSGGSTMFPGIEYRMYKELTQLAPSTTEIVINAPPERKNSVWIGGSILGLVPNFPELCFDKEDYDEYGRL.

This sequence belongs to the actin family.

It is found in the cytoplasm. It localises to the cytoskeleton. The catalysed reaction is ATP + H2O = ADP + phosphate + H(+). Actins are highly conserved proteins that are involved in various types of cell motility and are ubiquitously expressed in all eukaryotic cells. Multiple isoforms are involved in various cellular functions such as cytoskeleton structure, cell mobility, chromosome movement and muscle contraction. This chain is Putative actin-28 (act28), found in Dictyostelium discoideum (Social amoeba).